The following is a 720-amino-acid chain: Nucleolar protein 11 (720 aa).

Residues Lys-365 to Gly-392 form a disordered region.

It is found in the nucleus. The protein localises to the nucleolus. Its function is as follows. Ribosome biogenesis factor. May be required for both optimal rDNA transcription and pre-rRNA processing. In Xenopus laevis (African clawed frog), this protein is Nucleolar protein 11 (nol11).